The primary structure comprises 221 residues: Mitochondrial cardiolipin hydrolase (221 aa).

The Mitochondrial intermembrane segment spans residues 1–4; that stretch reads MGRS. The interval 1–38 is required for mitochondrial localization; sequence MGRSSWRLVFAAGAGLALALEALPWLMRWLLAGRRPRR. The chain crosses the membrane as a helical span at residues 5-27; the sequence is SWRLVFAAGAGLALALEALPWLM. Residues 28–221 are Cytoplasmic-facing; that stretch reads RWLLAGRRPR…SFFPQKHRGH (194 aa). A C3H1-type; atypical zinc finger spans residues 44–75; sequence PSQVTCTEALLQAPGLPPGPSGCPCSLPHSES. The region spanning 148–175 is the PLD phosphodiesterase domain; it reads DLGYMHHKFAIVDKKVLITGSLNWTTQA. Residues His-153, Lys-155, and Asp-160 contribute to the active site.

It belongs to the phospholipase D family. MitoPLD/Zucchini subfamily. As to quaternary structure, homodimer. Interacts with MOV10L1. Interacts with MIGA1 and MIGA2; possibly facilitating homodimer formation. Interacts with GK2. Predominantly expressed in testis (at protein level) and in growing ovary. Also expressed in the brain, eye and urinary bladder (at protein level), but its levels were low or undetectable in other organs.

Its subcellular location is the mitochondrion outer membrane. The protein localises to the nucleus membrane. It is found in the cell membrane. The protein resides in the golgi apparatus. The enzyme catalyses a cardiolipin + H2O = a 1,2-diacyl-sn-glycero-3-phospho-(1'-sn-glycerol) + a 1,2-diacyl-sn-glycero-3-phosphate + H(+). With respect to regulation, single stranded DNA (ssDNA) hydrolase activity does not depend upon, but is stimulated by the presence of Ca(2+) and Mn(2+). MIGA1 and MIGA2 increase PLD6 self-association affinity and affects the homodimer conformation facilitating its phospholipase activity over the nuclease activity. MYC induces its expression and stimulates its phospholipase activity. Its function is as follows. Presents phospholipase and nuclease activities, depending on the different physiological conditions. Interaction with Mitoguardin (MIGA1 or MIGA2) affects the dimer conformation, facilitating the lipase activity over the nuclease activity. Plays a key role in mitochondrial fusion and fission via its phospholipase activity. In its phospholipase role, it uses the mitochondrial lipid cardiolipin as substrate to generate phosphatidate (PA or 1,2-diacyl-sn-glycero-3-phosphate), a second messenger signaling lipid. Production of PA facilitates Mitofusin-mediated fusion, whereas the cleavage of PA by the Lipin family of phosphatases produces diacylgycerol (DAG) which promotes mitochondrial fission. Both Lipin and DAG regulate mitochondrial dynamics and membrane fusion/fission, important processes for adapting mitochondrial metabolism to changes in cell physiology. Mitochondrial fusion enables cells to cope with the increased nucleotide demand during DNA synthesis. Mitochondrial function and dynamics are closely associated with biological processes such as cell growth, proliferation, and differentiation. Mediator of MYC activity, promotes mitochondrial fusion and activates AMPK which in turn inhibits YAP/TAZ, thereby inducing cell growth and proliferation. The endonuclease activity plays a critical role in PIWI-interacting RNA (piRNA) biogenesis during spermatogenesis. Implicated in spermatogenesis and sperm fertility in testicular germ cells, its single strand-specific nuclease activity is critical for the biogenesis/maturation of PIWI-interacting RNA (piRNA). MOV10L1 selectively binds to piRNA precursors and funnels them to the endonuclease that catalyzes the first cleavage step of piRNA processing to generate piRNA intermediate fragments that are subsequently loaded to Piwi proteins. Cleaves either DNA or RNA substrates with similar affinity, producing a 5' phosphate end, in this way it participates in the processing of primary piRNA transcripts. piRNAs provide essential protection against the activity of mobile genetic elements. piRNA-mediated transposon silencing is thus critical for maintaining genome stability, in particular in germline cells when transposons are mobilized as a consequence of wide-spread genomic demethylation. PA may act as signaling molecule in the recognition/transport of the precursor RNAs of primary piRNAs. Interacts with tesmin in testes, suggesting a role in spermatogenesis via association with its interacting partner. The polypeptide is Mitochondrial cardiolipin hydrolase (Pld6) (Mus musculus (Mouse)).